A 381-amino-acid chain; its full sequence is EPS I polysaccharide export outer membrane protein EpsA (381 aa).

An N-terminal signal peptide occupies residues 1 to 23 (MFVSIPNIRKAVVSLSVVPLLAA). Cys24 is lipidated: N-palmitoyl cysteine. Cys24 carries S-diacylglycerol cysteine lipidation.

Belongs to the BexD/CtrA/VexA family.

Its subcellular location is the cell outer membrane. Probably involved in polymerization and/or export of exopolysaccharide EPS I which functions as a virulence factor. The sequence is that of EPS I polysaccharide export outer membrane protein EpsA (epsA) from Ralstonia nicotianae (strain ATCC BAA-1114 / GMI1000) (Ralstonia solanacearum).